The sequence spans 282 residues: 4-hydroxy-3-methylbut-2-enyl diphosphate reductase (282 aa).

Position 14 (C14) interacts with [4Fe-4S] cluster. 2 residues coordinate (2E)-4-hydroxy-3-methylbut-2-enyl diphosphate: H43 and H78. Dimethylallyl diphosphate contacts are provided by H43 and H78. H43 and H78 together coordinate isopentenyl diphosphate. C100 contributes to the [4Fe-4S] cluster binding site. (2E)-4-hydroxy-3-methylbut-2-enyl diphosphate is bound at residue H128. H128 contributes to the dimethylallyl diphosphate binding site. Position 128 (H128) interacts with isopentenyl diphosphate. E130 serves as the catalytic Proton donor. T164 contacts (2E)-4-hydroxy-3-methylbut-2-enyl diphosphate. C192 lines the [4Fe-4S] cluster pocket. (2E)-4-hydroxy-3-methylbut-2-enyl diphosphate is bound by residues S220, S221, N222, and S266. Dimethylallyl diphosphate is bound by residues S220, S221, N222, and S266. Residues S220, S221, N222, and S266 each coordinate isopentenyl diphosphate.

This sequence belongs to the IspH family. [4Fe-4S] cluster serves as cofactor.

It catalyses the reaction isopentenyl diphosphate + 2 oxidized [2Fe-2S]-[ferredoxin] + H2O = (2E)-4-hydroxy-3-methylbut-2-enyl diphosphate + 2 reduced [2Fe-2S]-[ferredoxin] + 2 H(+). It carries out the reaction dimethylallyl diphosphate + 2 oxidized [2Fe-2S]-[ferredoxin] + H2O = (2E)-4-hydroxy-3-methylbut-2-enyl diphosphate + 2 reduced [2Fe-2S]-[ferredoxin] + 2 H(+). It functions in the pathway isoprenoid biosynthesis; dimethylallyl diphosphate biosynthesis; dimethylallyl diphosphate from (2E)-4-hydroxy-3-methylbutenyl diphosphate: step 1/1. Its pathway is isoprenoid biosynthesis; isopentenyl diphosphate biosynthesis via DXP pathway; isopentenyl diphosphate from 1-deoxy-D-xylulose 5-phosphate: step 6/6. Functionally, catalyzes the conversion of 1-hydroxy-2-methyl-2-(E)-butenyl 4-diphosphate (HMBPP) into a mixture of isopentenyl diphosphate (IPP) and dimethylallyl diphosphate (DMAPP). Acts in the terminal step of the DOXP/MEP pathway for isoprenoid precursor biosynthesis. This Clostridium perfringens (strain 13 / Type A) protein is 4-hydroxy-3-methylbut-2-enyl diphosphate reductase.